A 314-amino-acid chain; its full sequence is Porphobilinogen deaminase (314 aa).

Cys-249 bears the S-(dipyrrolylmethanemethyl)cysteine mark.

This sequence belongs to the HMBS family. In terms of assembly, monomer. It depends on dipyrromethane as a cofactor.

The enzyme catalyses 4 porphobilinogen + H2O = hydroxymethylbilane + 4 NH4(+). The protein operates within porphyrin-containing compound metabolism; protoporphyrin-IX biosynthesis; coproporphyrinogen-III from 5-aminolevulinate: step 2/4. In terms of biological role, tetrapolymerization of the monopyrrole PBG into the hydroxymethylbilane pre-uroporphyrinogen in several discrete steps. The chain is Porphobilinogen deaminase from Brucella abortus (strain S19).